A 414-amino-acid polypeptide reads, in one-letter code: Isocitrate dehydrogenase [NADP] cytoplasmic (414 aa).

The residue at position 2 (S2) is an N-acetylserine. Position 42 is a phosphotyrosine (Y42). 75 to 77 serves as a coordination point for NADP(+); sequence TIT. Residue T77 participates in substrate binding. K81 carries the N6-acetyllysine modification. Residue R82 participates in NADP(+) binding. Residues 94–100 and R109 contribute to the substrate site; that span reads SPNGTIR. N6-succinyllysine is present on K126. Substrate-binding residues include R132 and K212. N6-acetyllysine occurs at positions 224 and 233. D252 is a binding site for Mn(2+). K260 contributes to the NADP(+) binding site. 2 residues coordinate Mn(2+): D275 and D279. 310–315 provides a ligand contact to NADP(+); sequence GTVTRH. K321 bears the N6-acetyllysine mark. N328 lines the NADP(+) pocket. Position 389 is a phosphoserine (S389). K400 is modified (N6-succinyllysine).

Belongs to the isocitrate and isopropylmalate dehydrogenases family. Homodimer. Mg(2+) is required as a cofactor. Mn(2+) serves as cofactor. Acetylation at Lys-374 dramatically reduces catalytic activity.

It is found in the cytoplasm. The protein resides in the cytosol. The catalysed reaction is D-threo-isocitrate + NADP(+) = 2-oxoglutarate + CO2 + NADPH. Catalyzes the NADP(+)-dependent oxidative decarboxylation of isocitrate (D-threo-isocitrate) to 2-ketoglutarate (2-oxoglutarate), which is required by other enzymes such as the phytanoyl-CoA dioxygenase. Plays a critical role in the generation of NADPH, an important cofactor in many biosynthesis pathways. May act as a corneal epithelial crystallin and may be involved in maintaining corneal epithelial transparency. The sequence is that of Isocitrate dehydrogenase [NADP] cytoplasmic (IDH1) from Ovis aries (Sheep).